Reading from the N-terminus, the 79-residue chain is Acyl carrier protein (79 aa).

Residues 6 to 79 enclose the Carrier domain; it reads KEILDGLAEI…VQDVINYIQK (74 aa). At serine 41 the chain carries O-(pantetheine 4'-phosphoryl)serine.

This sequence belongs to the acyl carrier protein (ACP) family. 4'-phosphopantetheine is transferred from CoA to a specific serine of apo-ACP by AcpS. This modification is essential for activity because fatty acids are bound in thioester linkage to the sulfhydryl of the prosthetic group.

The protein resides in the cytoplasm. It functions in the pathway lipid metabolism; fatty acid biosynthesis. In terms of biological role, carrier of the growing fatty acid chain in fatty acid biosynthesis. The chain is Acyl carrier protein from Thermobifida fusca (strain YX).